A 230-amino-acid chain; its full sequence is Large ribosomal subunit protein uL1 (230 aa).

This sequence belongs to the universal ribosomal protein uL1 family. As to quaternary structure, part of the 50S ribosomal subunit.

Its function is as follows. Binds directly to 23S rRNA. The L1 stalk is quite mobile in the ribosome, and is involved in E site tRNA release. In terms of biological role, protein L1 is also a translational repressor protein, it controls the translation of the L11 operon by binding to its mRNA. This is Large ribosomal subunit protein uL1 from Lactobacillus gasseri (strain ATCC 33323 / DSM 20243 / BCRC 14619 / CIP 102991 / JCM 1131 / KCTC 3163 / NCIMB 11718 / NCTC 13722 / AM63).